The primary structure comprises 368 residues: DNA replication and repair protein RecF (368 aa).

An ATP-binding site is contributed by 30-37 (GRNGSGKT).

The protein belongs to the RecF family.

It localises to the cytoplasm. Its function is as follows. The RecF protein is involved in DNA metabolism; it is required for DNA replication and normal SOS inducibility. RecF binds preferentially to single-stranded, linear DNA. It also seems to bind ATP. This is DNA replication and repair protein RecF from Chlorobaculum tepidum (strain ATCC 49652 / DSM 12025 / NBRC 103806 / TLS) (Chlorobium tepidum).